The chain runs to 154 residues: Transcriptional repressor NrdR (154 aa).

The segment at 3 to 34 (CPYCRHPDSRVVDSREADDGQLIRRRRSCPEC) is a zinc-finger region. The 91-residue stretch at 46-136 (LAVVKRSGVT…VYRSFESLAD (91 aa)) folds into the ATP-cone domain.

Belongs to the NrdR family. Requires Zn(2+) as cofactor.

Negatively regulates transcription of bacterial ribonucleotide reductase nrd genes and operons by binding to NrdR-boxes. In Salinispora arenicola (strain CNS-205), this protein is Transcriptional repressor NrdR.